Consider the following 535-residue polypeptide: Suppressor of cytokine signaling 6 (535 aa).

Residues 80–89 are compositionally biased toward basic residues; that stretch reads RLSAKQKSKG. Residues 80–105 form a disordered region; it reads RLSAKQKSKGKAGTPSGSSADEDTFS. The SH2 domain occupies 384-491; it reads WYWGPITRWE…TYPVRLTNPV (108 aa). One can recognise an SOCS box domain in the interval 486–535; it reads RLTNPVSRFMQVRSLQYLCRFVIRQYTRIDLIQKLPLPNKMKDYLQEKHY.

Interacts with RBCK1. Interacts with phosphorylated IRS4. Interacts with KIT (phosphorylated). Interacts with PIM3.

It participates in protein modification; protein ubiquitination. In terms of biological role, SOCS family proteins form part of a classical negative feedback system that regulates cytokine signal transduction. May be a substrate recognition component of a SCF-like ECS (Elongin BC-CUL2/5-SOCS-box protein) E3 ubiquitin-protein ligase complex which mediates the ubiquitination and subsequent proteasomal degradation of target proteins. Regulates KIT degradation by ubiquitination of the tyrosine-phosphorylated receptor. This is Suppressor of cytokine signaling 6 (SOCS6) from Pongo abelii (Sumatran orangutan).